Here is a 390-residue protein sequence, read N- to C-terminus: 23S rRNA (uracil(747)-C(5))-methyltransferase RlmC (390 aa).

Residues Cys12, Cys20, Cys23, and Cys100 each contribute to the [4Fe-4S] cluster site. Residues Gln225, Phe254, Glu275, and Asn322 each contribute to the S-adenosyl-L-methionine site. The active-site Nucleophile is the Cys349.

This sequence belongs to the class I-like SAM-binding methyltransferase superfamily. RNA M5U methyltransferase family. RlmC subfamily.

The catalysed reaction is uridine(747) in 23S rRNA + S-adenosyl-L-methionine = 5-methyluridine(747) in 23S rRNA + S-adenosyl-L-homocysteine + H(+). In terms of biological role, catalyzes the formation of 5-methyl-uridine at position 747 (m5U747) in 23S rRNA. The protein is 23S rRNA (uracil(747)-C(5))-methyltransferase RlmC of Shewanella baltica (strain OS223).